We begin with the raw amino-acid sequence, 414 residues long: Histidine--tRNA ligase (414 aa).

This sequence belongs to the class-II aminoacyl-tRNA synthetase family. As to quaternary structure, homodimer.

The protein resides in the cytoplasm. The catalysed reaction is tRNA(His) + L-histidine + ATP = L-histidyl-tRNA(His) + AMP + diphosphate + H(+). The protein is Histidine--tRNA ligase (hisS) of Mycoplasma genitalium (strain ATCC 33530 / DSM 19775 / NCTC 10195 / G37) (Mycoplasmoides genitalium).